Reading from the N-terminus, the 100-residue chain is MNLTPREKDKLLISMAAMVARRRLERGVKLNHPEAIALITDFVVEGARDGRSVAELMEAGAHVLTRDQVMEGIAEMIHDIQVEATFPDGTKLVTVHEPIR.

This sequence belongs to the urease gamma subunit family. As to quaternary structure, heterotrimer of UreA (gamma), UreB (beta) and UreC (alpha) subunits. Three heterotrimers associate to form the active enzyme.

The protein localises to the cytoplasm. The enzyme catalyses urea + 2 H2O + H(+) = hydrogencarbonate + 2 NH4(+). Its pathway is nitrogen metabolism; urea degradation; CO(2) and NH(3) from urea (urease route): step 1/1. This Rhizobium meliloti (strain 1021) (Ensifer meliloti) protein is Urease subunit gamma.